The chain runs to 132 residues: Transcription antitermination protein NusB (132 aa).

It belongs to the NusB family.

Functionally, involved in transcription antitermination. Required for transcription of ribosomal RNA (rRNA) genes. Binds specifically to the boxA antiterminator sequence of the ribosomal RNA (rrn) operons. This Sulfurimonas denitrificans (strain ATCC 33889 / DSM 1251) (Thiomicrospira denitrificans (strain ATCC 33889 / DSM 1251)) protein is Transcription antitermination protein NusB.